Reading from the N-terminus, the 232-residue chain is Ubiquitin carboxyl-terminal hydrolase UCHL3 (232 aa).

The 220-residue stretch at 6-225 folds into the UCH catalytic domain; that stretch reads IWTPLESNPD…LRFSALAVIP (220 aa). Residues 10-14 are interaction with ubiquitin; it reads LESNP. The Nucleophile role is filled by Cys-92. Residues 151–159 are crossover loop which restricts access of large ubiquitin adducts to the active site; the sequence is QVENRDDIL. The interval 163-165 is interaction with ubiquitin; sequence THF. The active-site Proton donor is His-164.

This sequence belongs to the peptidase C12 family.

The catalysed reaction is Thiol-dependent hydrolysis of ester, thioester, amide, peptide and isopeptide bonds formed by the C-terminal Gly of ubiquitin (a 76-residue protein attached to proteins as an intracellular targeting signal).. Functionally, thiol protease that recognizes and hydrolyzes a peptide bond at the C-terminal glycine of either ubiquitin or NEDD8. Essential for parasite blood stage survival. The chain is Ubiquitin carboxyl-terminal hydrolase UCHL3 from Plasmodium falciparum (isolate 3D7).